A 124-amino-acid chain; its full sequence is MPTIQQLVRKGRQDKVAKTKTAALKGSPQRRGVCTRVYTTTPKKPNSALRKVARVKLTSGIEVTAYIPGEGHNLQEHSIVLVRGGRVKDLPGVRYKIIRGSADTQGVKNRKQARSRYGAKKEKS.

Positions 1 to 30 (MPTIQQLVRKGRQDKVAKTKTAALKGSPQR) are disordered. D89 is modified (3-methylthioaspartic acid). Residues 102-124 (ADTQGVKNRKQARSRYGAKKEKS) are disordered. A compositionally biased stretch (basic residues) spans 108–118 (KNRKQARSRYG).

The protein belongs to the universal ribosomal protein uS12 family. As to quaternary structure, part of the 30S ribosomal subunit. Contacts proteins S8 and S17. May interact with IF1 in the 30S initiation complex.

With S4 and S5 plays an important role in translational accuracy. Functionally, interacts with and stabilizes bases of the 16S rRNA that are involved in tRNA selection in the A site and with the mRNA backbone. Located at the interface of the 30S and 50S subunits, it traverses the body of the 30S subunit contacting proteins on the other side and probably holding the rRNA structure together. The combined cluster of proteins S8, S12 and S17 appears to hold together the shoulder and platform of the 30S subunit. The protein is Small ribosomal subunit protein uS12 of Saccharopolyspora erythraea (strain ATCC 11635 / DSM 40517 / JCM 4748 / NBRC 13426 / NCIMB 8594 / NRRL 2338).